A 25-amino-acid polypeptide reads, in one-letter code: Glutamine synthetase 2 isozyme (25 aa).

The protein belongs to the glutamine synthetase family. Homohexamer.

It is found in the plastid. It localises to the chloroplast. The catalysed reaction is L-glutamate + NH4(+) + ATP = L-glutamine + ADP + phosphate + H(+). Its function is as follows. Plays a key role in the nitrogen metabolism of microorganisms, animals and plants. The protein is Glutamine synthetase 2 isozyme of Emiliania huxleyi (Coccolithophore).